A 345-amino-acid chain; its full sequence is tRNA N6-adenosine threonylcarbamoyltransferase (345 aa).

2 residues coordinate Fe cation: His-115 and His-119. Residues 137-141 (LVSGG), Asp-170, Gly-183, Asp-187, and Asn-276 each bind substrate. A Fe cation-binding site is contributed by Asp-306.

This sequence belongs to the KAE1 / TsaD family. Requires Fe(2+) as cofactor.

The protein localises to the cytoplasm. It catalyses the reaction L-threonylcarbamoyladenylate + adenosine(37) in tRNA = N(6)-L-threonylcarbamoyladenosine(37) in tRNA + AMP + H(+). Functionally, required for the formation of a threonylcarbamoyl group on adenosine at position 37 (t(6)A37) in tRNAs that read codons beginning with adenine. Is involved in the transfer of the threonylcarbamoyl moiety of threonylcarbamoyl-AMP (TC-AMP) to the N6 group of A37, together with TsaE and TsaB. TsaD likely plays a direct catalytic role in this reaction. The sequence is that of tRNA N6-adenosine threonylcarbamoyltransferase from Pediococcus pentosaceus (strain ATCC 25745 / CCUG 21536 / LMG 10740 / 183-1w).